Reading from the N-terminus, the 49-residue chain is Large ribosomal subunit protein bL33A (49 aa).

This sequence belongs to the bacterial ribosomal protein bL33 family.

The sequence is that of Large ribosomal subunit protein bL33A from Limosilactobacillus reuteri subsp. reuteri (strain JCM 1112) (Lactobacillus reuteri).